A 396-amino-acid polypeptide reads, in one-letter code: Tyrosine--tRNA ligase (396 aa).

A 'HIGH' region motif is present at residues 43–52 (PTAPDIHLGH). The 'KMSKS' region signature appears at 227–231 (KMSKS). Lys-230 provides a ligand contact to ATP. Positions 335–395 (IGLATLLKEA…GKRKFARVTV (61 aa)) constitute an S4 RNA-binding domain.

It belongs to the class-I aminoacyl-tRNA synthetase family. TyrS type 2 subfamily. As to quaternary structure, homodimer.

It localises to the cytoplasm. It catalyses the reaction tRNA(Tyr) + L-tyrosine + ATP = L-tyrosyl-tRNA(Tyr) + AMP + diphosphate + H(+). Its function is as follows. Catalyzes the attachment of tyrosine to tRNA(Tyr) in a two-step reaction: tyrosine is first activated by ATP to form Tyr-AMP and then transferred to the acceptor end of tRNA(Tyr). The chain is Tyrosine--tRNA ligase from Haemophilus ducreyi (strain 35000HP / ATCC 700724).